Reading from the N-terminus, the 165-residue chain is NADPH-dependent 7-cyano-7-deazaguanine reductase (165 aa).

Cys-56 acts as the Thioimide intermediate in catalysis. Catalysis depends on Asp-63, which acts as the Proton donor. Substrate contacts are provided by residues 78–80 (VES) and 97–98 (HE).

It belongs to the GTP cyclohydrolase I family. QueF type 1 subfamily.

It is found in the cytoplasm. It carries out the reaction 7-aminomethyl-7-carbaguanine + 2 NADP(+) = 7-cyano-7-deazaguanine + 2 NADPH + 3 H(+). It functions in the pathway tRNA modification; tRNA-queuosine biosynthesis. In terms of biological role, catalyzes the NADPH-dependent reduction of 7-cyano-7-deazaguanine (preQ0) to 7-aminomethyl-7-deazaguanine (preQ1). The sequence is that of NADPH-dependent 7-cyano-7-deazaguanine reductase from Bacillus anthracis (strain A0248).